The sequence spans 359 residues: Leafy/floricaula homolog FL1 (359 aa).

Residues 113–170 (SEEQVVQHSEKDQLGRAGSGDTAGTSWGAQQQRKKHRHRHHITAMKGAATEEDEEDEE) are disordered. Residues 144–155 (QRKKHRHRHHIT) are compositionally biased toward basic residues. 3 DNA-binding regions span residues 179–183 (REHPF), 248–255 (NKPKMRHY), and 320–323 (YVPT). Residues 340–352 (ASSASTSTSAPTA) show a composition bias toward low complexity. The segment at 340-359 (ASSASTSTSAPTAHHLELPY) is disordered.

The protein belongs to the FLO/LFY family. In terms of tissue distribution, expressed strongly in the early floral primordium and then successively in the primordia of sepals, petals, stamens and carpels. Also in the leaf primordia and young leaves.

It is found in the nucleus. Its function is as follows. Probable transcription factor. The sequence is that of Leafy/floricaula homolog FL1 (LF1) from Eucalyptus globulus (Tasmanian blue gum).